Here is a 370-residue protein sequence, read N- to C-terminus: Phospho-N-acetylmuramoyl-pentapeptide-transferase (370 aa).

The next 10 membrane-spanning stretches (helical) occupy residues 24-44 (YLTF…VAMG), 78-98 (TMGG…WADL), 103-123 (VWVV…DDYA), 138-158 (KLVA…LFAP), 177-197 (ALVI…IAGF), 209-229 (GLAI…AYLV), 245-265 (GVGE…GFLW), 273-293 (IFMG…IAVC), 298-318 (LVLG…MIQV), and 347-367 (TVVI…LATL).

This sequence belongs to the glycosyltransferase 4 family. MraY subfamily. Mg(2+) serves as cofactor.

The protein localises to the cell inner membrane. The enzyme catalyses UDP-N-acetyl-alpha-D-muramoyl-L-alanyl-gamma-D-glutamyl-meso-2,6-diaminopimeloyl-D-alanyl-D-alanine + di-trans,octa-cis-undecaprenyl phosphate = di-trans,octa-cis-undecaprenyl diphospho-N-acetyl-alpha-D-muramoyl-L-alanyl-D-glutamyl-meso-2,6-diaminopimeloyl-D-alanyl-D-alanine + UMP. It participates in cell wall biogenesis; peptidoglycan biosynthesis. Its function is as follows. Catalyzes the initial step of the lipid cycle reactions in the biosynthesis of the cell wall peptidoglycan: transfers peptidoglycan precursor phospho-MurNAc-pentapeptide from UDP-MurNAc-pentapeptide onto the lipid carrier undecaprenyl phosphate, yielding undecaprenyl-pyrophosphoryl-MurNAc-pentapeptide, known as lipid I. The sequence is that of Phospho-N-acetylmuramoyl-pentapeptide-transferase from Caulobacter vibrioides (strain NA1000 / CB15N) (Caulobacter crescentus).